A 271-amino-acid chain; its full sequence is 3-methyl-2-oxobutanoate hydroxymethyltransferase 1 (271 aa).

Residues aspartate 53 and aspartate 92 each coordinate Mg(2+). 3-methyl-2-oxobutanoate is bound by residues 53–54 (DS), aspartate 92, and lysine 120. Glutamate 122 serves as a coordination point for Mg(2+). Glutamate 189 serves as the catalytic Proton acceptor.

Belongs to the PanB family. In terms of assembly, homodecamer; pentamer of dimers. Requires Mg(2+) as cofactor.

The protein resides in the cytoplasm. It carries out the reaction 3-methyl-2-oxobutanoate + (6R)-5,10-methylene-5,6,7,8-tetrahydrofolate + H2O = 2-dehydropantoate + (6S)-5,6,7,8-tetrahydrofolate. Its pathway is cofactor biosynthesis; (R)-pantothenate biosynthesis; (R)-pantoate from 3-methyl-2-oxobutanoate: step 1/2. Its function is as follows. Catalyzes the reversible reaction in which hydroxymethyl group from 5,10-methylenetetrahydrofolate is transferred onto alpha-ketoisovalerate to form ketopantoate. The chain is 3-methyl-2-oxobutanoate hydroxymethyltransferase 1 from Burkholderia cenocepacia (strain HI2424).